We begin with the raw amino-acid sequence, 474 residues long: tRNA-2-methylthio-N(6)-dimethylallyladenosine synthase (474 aa).

An MTTase N-terminal domain is found at 3 to 120; it reads KKLHIKTWGC…LPEMINSVRG (118 aa). The [4Fe-4S] cluster site is built by Cys-12, Cys-49, Cys-83, Cys-157, Cys-161, and Cys-164. Residues 143–375 form the Radical SAM core domain; sequence RAEGPTAFVS…QERINQQAMA (233 aa). The region spanning 378 to 441 is the TRAM domain; it reads RRMLGTVQRI…TNSLRGKIVR (64 aa).

It belongs to the methylthiotransferase family. MiaB subfamily. In terms of assembly, monomer. Requires [4Fe-4S] cluster as cofactor.

It localises to the cytoplasm. It carries out the reaction N(6)-dimethylallyladenosine(37) in tRNA + (sulfur carrier)-SH + AH2 + 2 S-adenosyl-L-methionine = 2-methylsulfanyl-N(6)-dimethylallyladenosine(37) in tRNA + (sulfur carrier)-H + 5'-deoxyadenosine + L-methionine + A + S-adenosyl-L-homocysteine + 2 H(+). In terms of biological role, catalyzes the methylthiolation of N6-(dimethylallyl)adenosine (i(6)A), leading to the formation of 2-methylthio-N6-(dimethylallyl)adenosine (ms(2)i(6)A) at position 37 in tRNAs that read codons beginning with uridine. The sequence is that of tRNA-2-methylthio-N(6)-dimethylallyladenosine synthase from Klebsiella pneumoniae subsp. pneumoniae (strain ATCC 700721 / MGH 78578).